Reading from the N-terminus, the 319-residue chain is Acetyl esterase (319 aa).

The short motif at His-91–Gly-93 is the Involved in the stabilization of the negatively charged intermediate by the formation of the oxyanion hole element. Catalysis depends on residues Ser-165, Asp-262, and His-292.

Belongs to the 'GDXG' lipolytic enzyme family. In terms of assembly, homodimer. Interacts with MalT and MelA.

The protein localises to the cytoplasm. In terms of biological role, displays esterase activity towards short chain fatty esters (acyl chain length of up to 8 carbons). Able to hydrolyze triacetylglycerol (triacetin) and tributyrylglycerol (tributyrin), but not trioleylglycerol (triolein) or cholesterol oleate. Negatively regulates MalT activity by antagonizing maltotriose binding. Inhibits MelA galactosidase activity. The sequence is that of Acetyl esterase from Shigella flexneri serotype 5b (strain 8401).